Consider the following 267-residue polypeptide: Small ribosomal subunit protein uS2 (267 aa).

The interval 226–267 is disordered; the sequence is AAAPNSASVREEEFSAESADEGKGRRAPAKKGEKKADAPAAE. Positions 245-267 are enriched in basic and acidic residues; sequence DEGKGRRAPAKKGEKKADAPAAE.

Belongs to the universal ribosomal protein uS2 family.

The chain is Small ribosomal subunit protein uS2 from Xanthomonas oryzae pv. oryzae (strain MAFF 311018).